The following is a 693-amino-acid chain: Protein arginine N-methyltransferase 7 (693 aa).

SAM-dependent MTase PRMT-type domains follow at residues 14-345 (SLEW…YCVW) and 358-684 (SAYQ…ITME). Omega-N-methylarginine is present on Arg-32. Catalysis depends on residues Glu-144 and Glu-153.

The protein belongs to the class I-like SAM-binding methyltransferase superfamily. Protein arginine N-methyltransferase family. PRMT7 subfamily. In terms of assembly, homodimer and heterodimer. Interacts with CTCFL, PRMT5 and SNRPD3.

The protein localises to the cytoplasm. It localises to the cytosol. It is found in the nucleus. The enzyme catalyses L-arginyl-[protein] + S-adenosyl-L-methionine = N(omega)-methyl-L-arginyl-[protein] + S-adenosyl-L-homocysteine + H(+). Its function is as follows. Arginine methyltransferase that can both catalyze the formation of omega-N monomethylarginine (MMA) and symmetrical dimethylarginine (sDMA), with a preference for the formation of MMA. Specifically mediates the symmetrical dimethylation of arginine residues in the small nuclear ribonucleoproteins Sm D1 (SNRPD1) and Sm D3 (SNRPD3); such methylation being required for the assembly and biogenesis of snRNP core particles. Specifically mediates the symmetric dimethylation of histone H4 'Arg-3' to form H4R3me2s. Plays a role in gene imprinting by being recruited by CTCFL at the H19 imprinted control region (ICR) and methylating histone H4 to form H4R3me2s, possibly leading to recruit DNA methyltransferases at these sites. May also play a role in embryonic stem cell (ESC) pluripotency. Also able to mediate the arginine methylation of histone H2A and myelin basic protein (MBP) in vitro; the relevance of such results is however unclear in vivo. In Rattus norvegicus (Rat), this protein is Protein arginine N-methyltransferase 7 (Prmt7).